The primary structure comprises 429 residues: Adenylosuccinate synthetase (429 aa).

Residues 12-18 and 40-42 each bind GTP; these read GDEGKGK and GHT. Catalysis depends on aspartate 13, which acts as the Proton acceptor. Mg(2+) is bound by residues aspartate 13 and glycine 40. IMP is bound by residues 13–16, 38–41, threonine 128, arginine 142, glutamine 223, threonine 238, and arginine 302; these read DEGK and NAGH. Residue histidine 41 is the Proton donor of the active site. A substrate-binding site is contributed by 298-304; it reads TVTGRPR. Residues arginine 304, 330 to 332, and 412 to 414 contribute to the GTP site; these read LLD and SVG.

This sequence belongs to the adenylosuccinate synthetase family. In terms of assembly, homodimer. The cofactor is Mg(2+).

It localises to the cytoplasm. The catalysed reaction is IMP + L-aspartate + GTP = N(6)-(1,2-dicarboxyethyl)-AMP + GDP + phosphate + 2 H(+). It participates in purine metabolism; AMP biosynthesis via de novo pathway; AMP from IMP: step 1/2. Plays an important role in the de novo pathway of purine nucleotide biosynthesis. Catalyzes the first committed step in the biosynthesis of AMP from IMP. The chain is Adenylosuccinate synthetase from Lactobacillus gasseri (strain ATCC 33323 / DSM 20243 / BCRC 14619 / CIP 102991 / JCM 1131 / KCTC 3163 / NCIMB 11718 / NCTC 13722 / AM63).